The primary structure comprises 793 residues: Serine/threonine-protein phosphatase BSU1 (793 aa).

Kelch repeat units follow at residues 53 to 109 (STTA…LYGT), 110 to 160 (LILI…IAAQ), 214 to 262 (IFLL…VFGG), 264 to 314 (KLHV…NQYQ), and 329 to 388 (HLYV…EASS). Phosphoserine occurs at positions 395 and 444. Residues D510, H512, D544, and N576 each coordinate Mn(2+). H577 serves as the catalytic Proton donor. H629 and H707 together coordinate Mn(2+). Phosphoserine is present on S764.

The protein belongs to the PPP phosphatase family. BSU subfamily. Interacts with CDG1, CDL1 and ASK7/BIN2. Requires Mn(2+) as cofactor. In terms of processing, phosphorylated at Ser-395 and Ser-444. Phosphorylated at Ser-764 by CDG1 and CDL1. As to expression, mainly expressed in young, elongating tissues. In young seedlings, it is expressed at the base of the hypocotyl, at the tip and most peripheral cell layers of cotyledons, and in the vascular cylinder of roots, particularly in the elongation zone and at the point of emergence of lateral roots. In mature plants, it is still present in the root vasculature, but almost completely absent in fully expanded stems and leaves. In flowers, it is mainly expressed in sepal veins, anther filaments, and in the style, suggesting that BSU1 is expressed in actively growing regions and apparently enriched in vascular tissues.

The protein resides in the nucleus. It catalyses the reaction O-phospho-L-seryl-[protein] + H2O = L-seryl-[protein] + phosphate. It carries out the reaction O-phospho-L-threonyl-[protein] + H2O = L-threonyl-[protein] + phosphate. With respect to regulation, activated by phosphorylation at Ser-764 by CDG1. Phosphatase that acts as a positive regulator of brassinosteroid (BR) signaling. Dephosphorylates BES1, a transcription factor that regulates the expression of BR-response genes, thereby playing an important role in the regulation of response to BRs. Inactivates the negative regulator of BR signaling ASK7/BIN2 by dephosphorylation at 'Tyr-200'. The chain is Serine/threonine-protein phosphatase BSU1 (BSU1) from Arabidopsis thaliana (Mouse-ear cress).